A 512-amino-acid chain; its full sequence is Probable cobyric acid synthase (512 aa).

In terms of domain architecture, GATase cobBQ-type spans Ser-275–Ala-460. The active-site Nucleophile is Cys-353. The active site involves His-452.

It belongs to the CobB/CobQ family. CobQ subfamily.

It functions in the pathway cofactor biosynthesis; adenosylcobalamin biosynthesis. Its function is as follows. Catalyzes amidations at positions B, D, E, and G on adenosylcobyrinic A,C-diamide. NH(2) groups are provided by glutamine, and one molecule of ATP is hydrogenolyzed for each amidation. In Halobacterium salinarum (strain ATCC 29341 / DSM 671 / R1), this protein is Probable cobyric acid synthase.